The chain runs to 104 residues: Urease subunit beta (104 aa).

This sequence belongs to the urease beta subunit family. As to quaternary structure, heterotrimer of UreA (gamma), UreB (beta) and UreC (alpha) subunits. Three heterotrimers associate to form the active enzyme.

It localises to the cytoplasm. It carries out the reaction urea + 2 H2O + H(+) = hydrogencarbonate + 2 NH4(+). It participates in nitrogen metabolism; urea degradation; CO(2) and NH(3) from urea (urease route): step 1/1. The protein is Urease subunit beta of Mycobacterium bovis (strain BCG / Pasteur 1173P2).